We begin with the raw amino-acid sequence, 575 residues long: MLEKVETFDMNRVIDEFDEMTRNAHQVQKQTLKEILLKNQSAIYLQNCGLNGNATDPEEAFKSMVPLVTDVELEPYIKRMVDGDTSPILTGHPVPAISLSSGTSQGRPKFIPFTDELMENTLQLFRTAFAFRNRDFPIDDNGKALQFIFSSKQYISTGGVPVGTATTNVYRNPNFKAGMKSITSPSCSPDEVIFSPDVHQALYCHLLSGILFRDQVQYVFAVFAHGLVHAFRTFEQVWEEIVTDIKDGVLSNRITVPSVRTAMSKLLTPNPELAETIRTKCMSLSNWYGLIPALFPNAKYVYGIMTGSMEPYVPKLRHYAGDLPLVSHDYGSSEGWIAANVTPRLSPEEATFAVIPNLGYFEFLPVSETGEGEEKPVGLTQVKIGEEYEVVITNYAGLYRYRLGDVVKVIGFYNNTPQLKFICRRNLILSINIDKNTERDLQLSVESAAKRLSEEKIEVIDFSSYIDVSTDPGHYAIFWEISGETNEDVLQDCCNCLDRAFIDAGYVSSRKCKTIGALELRVVAKGTFRKIQEHFLGLGSSAGQFKMPRCVKPSNAKVLQILCENVVSSYFSTAF.

Residues 10 to 30 are a coiled coil; that stretch reads MNRVIDEFDEMTRNAHQVQKQ. Serine 98 is an ATP binding site. Serine 101 provides a ligand contact to jasmonate. Residues methionine 118, threonine 121, glycine 163, asparagine 168, and 331–336 contribute to the ATP site; that span reads GSSEGW. 166–170 is a binding site for an L-alpha-amino acid; that stretch reads TTNVY. Jasmonate is bound at residue 328 to 331; sequence HDYG. An L-alpha-amino acid is bound at residue 530–534; it reads KIQEH. Lysine 557 provides a ligand contact to ATP.

The protein belongs to the IAA-amido conjugating enzyme family. In terms of assembly, interacts with GSTU20/FIP1 under continuous far red (cFR) light; this binding increases its activity and determines the priority of substrate binding.

The protein localises to the cytoplasm. The enzyme catalyses a jasmonate + an L-alpha-amino acid + ATP = a jasmonyl-L-amino acid + AMP + diphosphate + H(+). The catalysed reaction is (+)-7-isojasmonate + L-isoleucine + ATP = L-isoleucine-(+)-7-isojasmonate + AMP + diphosphate + H(+). Activated by GSTU20/FIP1. Functionally, catalyzes the synthesis of jasmonates-amino acid conjugates by adenylation; can use Ile and, in vitro at least, Val, Leu and Phe as conjugating amino acids on jasmonic acid (JA) and 9,10-dihydro-JA substrates, and to a lower extent, on 3-oxo-2-(2Z-pentenyl)-cyclopentane-1-butyric acid (OPC-4) and 12-hydroxy-JA (12-OH-JA). Can synthesize adenosine 5-tetraphosphate in vitro. Required for the JA-mediated signaling pathway that regulates many developmental and defense mechanisms, including growth root inhibition, vegetative storage proteins (VSPs) accumulation, induced systemic resistance (ISR), response to wounding and herbivores, tolerance to ozone O(3) (probably having a role in lesion containment). Plays an important role in the accumulation of JA-Ile in response to wounding, both locally and systemically; promotes JA responding genes especially in distal part of wounded plants, via the JA-Ile-stimulated degradation of JAZ repressor proteins by the SCF(COI)E3 ubiquitin-protein ligase pathway. Involved in the apoptosis-like programmed cell death (PCD) induced by fungal toxin fumonisin B1-mediated (FB1). Required for volatile compounds (C6-aldehydes and allo-ocimene)-mediated defense activation. Involved in the non-pathogenic rhizobacterium-mediated ISR (defense priming) by P.fluorescens (strains CHAOr and WCS417r) and P.putida LSW17S against infection leaf pathogens such as P.syringae pv. tomato and H.parasitica. Required for the JA-dependent resistance to fungi such as P.irregulare, U.vignae and U.appendiculatus. Necessary to induce systemic resistance against R.solanaceraum and P.syringae pv. tomato with P.oligandrum (a non-pathogenic biocontrol agent) cell wall protein fraction (CWP). Mediates PGIP2 accumulation in response to B.cinerea infection and thus contributes to resistance against this pathogen. Modulates the UV-B alteration of leaves attractiveness to diamondback moths P.xylostella leading to insect oviposition. Involved in the regulation of far-red light influence on development, being an actor of the interplay between light and JA signaling. Seems necessary for the salicylic acid (SA)-mediated, NPR1-independent resistance pathway. May contribute to the chitin-elicited pathway. Contributes to the sensitivity toward F.graminearum. The chain is Jasmonoyl--L-amino acid synthetase JAR1 from Arabidopsis thaliana (Mouse-ear cress).